The primary structure comprises 426 residues: Serine--tRNA ligase (426 aa).

233–235 (TAE) serves as a coordination point for L-serine. An ATP-binding site is contributed by 264-266 (RRE). E287 provides a ligand contact to L-serine. 351–354 (EISS) is a binding site for ATP. S386 is an L-serine binding site.

The protein belongs to the class-II aminoacyl-tRNA synthetase family. Type-1 seryl-tRNA synthetase subfamily. As to quaternary structure, homodimer. The tRNA molecule binds across the dimer.

The protein localises to the cytoplasm. It catalyses the reaction tRNA(Ser) + L-serine + ATP = L-seryl-tRNA(Ser) + AMP + diphosphate + H(+). The catalysed reaction is tRNA(Sec) + L-serine + ATP = L-seryl-tRNA(Sec) + AMP + diphosphate + H(+). It functions in the pathway aminoacyl-tRNA biosynthesis; selenocysteinyl-tRNA(Sec) biosynthesis; L-seryl-tRNA(Sec) from L-serine and tRNA(Sec): step 1/1. Functionally, catalyzes the attachment of serine to tRNA(Ser). Is also able to aminoacylate tRNA(Sec) with serine, to form the misacylated tRNA L-seryl-tRNA(Sec), which will be further converted into selenocysteinyl-tRNA(Sec). This Prochlorococcus marinus (strain NATL1A) protein is Serine--tRNA ligase.